A 189-amino-acid chain; its full sequence is Thymidine kinase (189 aa).

ATP-binding positions include 9–16 and 85–88; these read GTMNSGKT and DECQ. The active-site Proton acceptor is the Glu86. The Zn(2+) site is built by Cys143, Cys146, Cys180, and His183.

This sequence belongs to the thymidine kinase family. Homotetramer.

The protein localises to the cytoplasm. The enzyme catalyses thymidine + ATP = dTMP + ADP + H(+). The protein is Thymidine kinase of Streptococcus agalactiae serotype Ia (strain ATCC 27591 / A909 / CDC SS700).